A 64-amino-acid polypeptide reads, in one-letter code: Large ribosomal subunit protein bL35 (64 aa).

Composition is skewed to basic residues over residues Met1–Arg15 and Val23–Leu33. Positions Met1–Arg47 are disordered. The span at Glu34–Gly46 shows a compositional bias: basic and acidic residues.

This sequence belongs to the bacterial ribosomal protein bL35 family.

This is Large ribosomal subunit protein bL35 from Mycobacteroides abscessus (strain ATCC 19977 / DSM 44196 / CCUG 20993 / CIP 104536 / JCM 13569 / NCTC 13031 / TMC 1543 / L948) (Mycobacterium abscessus).